The following is a 303-amino-acid chain: MSLVECVPNFSEGRDRDRVNRIRDAIASVDTVKILDVEMDPNHNRSVITFVCDSSKAVDAAFAGIKAAAEIIDMDAHRGEHPRFGAADVIPFVPLQDTKMETCVRLARDLGKRVGEELGIPVYLYAEAAQRPDRSDLAAIRNKNFQYEQLKEAIKEEKWKPDFGPSVVGKAGASIIGARDFLIAYNVNLNTSNMEIGKKIASAIRAKDGGLTFVKSLAFFLKDKNMVQISMNLTNYRKTPIYRAYELVRLEAARYGVLPVESEIVGLVPEQALIDVAKYYLQLNGFDEGNILERKMEKAANME.

H81 functions as the For formimidoyltransferase activity in the catalytic mechanism. A folate-binding site is contributed by 164–172 (GPSVVGKAG).

Belongs to the formiminotransferase family.

The protein localises to the cytoplasm. It carries out the reaction (6S)-5-formyl-5,6,7,8-tetrahydrofolate + L-glutamate = N-formyl-L-glutamate + (6S)-5,6,7,8-tetrahydrofolate + H(+). The catalysed reaction is 5-formimidoyltetrahydrofolate + L-glutamate = N-formimidoyl-L-glutamate + (6S)-5,6,7,8-tetrahydrofolate. It catalyses the reaction (6S)-5-formyl-5,6,7,8-tetrahydrofolate + ATP = (6R)-5,10-methenyltetrahydrofolate + ADP + phosphate. It participates in amino-acid degradation; L-histidine degradation into L-glutamate; L-glutamate from N-formimidoyl-L-glutamate (transferase route): step 1/1. It functions in the pathway one-carbon metabolism; tetrahydrofolate interconversion. In terms of biological role, catalyzes the transfer of the formyl group from N-formylglutamate to tetrahydrofolate (THF) to yield 5-formyltetrahydrofolate (5-CHO-THF) and glutamate (Glu). The triglutamate form of 5-CHO-THF (5-CHO-THF-Glu3) can also be used as substrate. It can also catalyze the transfer of the formimino group from N-formiminoglutamate to tetrahydrofolate (THF) to yield 5-formiminotetrahydrofolate (5-NH=CH-THF) and glutamate (Glu). It can replace YgfA to catalyze the irreversible ATP-dependent transformation of 5-CHO-THF to form 5,10-methenyltetrahydrofolate (5,10-CH=THF). This Thermoplasma acidophilum (strain ATCC 25905 / DSM 1728 / JCM 9062 / NBRC 15155 / AMRC-C165) protein is Glutamate formimidoyltransferase.